The chain runs to 942 residues: UvrABC system protein A (942 aa).

32-39 (GLSGSGKS) is an ATP binding site. The C4-type zinc finger occupies 251 to 278 (CPVCGFTVPELEPRLFSFNAPFGSCPTC). ABC transporter domains are found at residues 308–589 (WNPI…KKSI) and 609–937 (GNGR…HYLK). 641-648 (GVSGSGKS) lines the ATP pocket. The C4-type zinc finger occupies 740 to 766 (CEACSGDGIIKIEMHFLPDVYVPCEVC).

It belongs to the ABC transporter superfamily. UvrA family. As to quaternary structure, forms a heterotetramer with UvrB during the search for lesions.

Its subcellular location is the cytoplasm. Functionally, the UvrABC repair system catalyzes the recognition and processing of DNA lesions. UvrA is an ATPase and a DNA-binding protein. A damage recognition complex composed of 2 UvrA and 2 UvrB subunits scans DNA for abnormalities. When the presence of a lesion has been verified by UvrB, the UvrA molecules dissociate. This Streptococcus pyogenes serotype M1 protein is UvrABC system protein A.